We begin with the raw amino-acid sequence, 147 residues long: MKIIIQRVKKAQVSIEGQIQGKINQGLLLLVGVGPEDQEEDLDYAVRKLVNMRIFSDAEGKMNLSVKDIEGEILSISQFTLFADTKRGNRPAFTGAAKPDMASDFYDAFNQKLAQEVPVQTGIFGADMQVELVNNGPVTIILDTKKR.

The Gly-cisPro motif, important for rejection of L-amino acids motif lies at 136–137; sequence GP.

Belongs to the DTD family. Homodimer.

The protein localises to the cytoplasm. The catalysed reaction is glycyl-tRNA(Ala) + H2O = tRNA(Ala) + glycine + H(+). The enzyme catalyses a D-aminoacyl-tRNA + H2O = a tRNA + a D-alpha-amino acid + H(+). An aminoacyl-tRNA editing enzyme that deacylates mischarged D-aminoacyl-tRNAs. Also deacylates mischarged glycyl-tRNA(Ala), protecting cells against glycine mischarging by AlaRS. Acts via tRNA-based rather than protein-based catalysis; rejects L-amino acids rather than detecting D-amino acids in the active site. By recycling D-aminoacyl-tRNA to D-amino acids and free tRNA molecules, this enzyme counteracts the toxicity associated with the formation of D-aminoacyl-tRNA entities in vivo and helps enforce protein L-homochirality. The chain is D-aminoacyl-tRNA deacylase from Streptococcus pneumoniae serotype 4 (strain ATCC BAA-334 / TIGR4).